An 89-amino-acid chain; its full sequence is Small ribosomal subunit protein uS17 (89 aa).

The protein belongs to the universal ribosomal protein uS17 family. Part of the 30S ribosomal subunit.

One of the primary rRNA binding proteins, it binds specifically to the 5'-end of 16S ribosomal RNA. The sequence is that of Small ribosomal subunit protein uS17 from Syntrophomonas wolfei subsp. wolfei (strain DSM 2245B / Goettingen).